Here is a 792-residue protein sequence, read N- to C-terminus: Type 2 topoisomerase subunit B (792 aa).

In terms of domain architecture, Toprim spans 423-537; sequence CEIFLVEGDS…EGYVYIAEPP (115 aa). Residues Glu429, Asp502, and Asp504 each contribute to the Mg(2+) site.

Belongs to the type II topoisomerase GyrB family. As to quaternary structure, heterotetramer, composed of two GyrA and two GyrB chains. In the heterotetramer, 'GyrA' contains the active site tyrosine that forms a transient covalent intermediate with DNA, while 'GyrB' binds cofactors and catalyzes ATP hydrolysis. Mg(2+) serves as cofactor. Mn(2+) is required as a cofactor. It depends on Ca(2+) as a cofactor.

The protein resides in the cytoplasm. The catalysed reaction is ATP-dependent breakage, passage and rejoining of double-stranded DNA.. A type II topoisomerase. Despite its similarity to DNA gyrase, this enzyme is not able to supercoil DNA, and instead acts like topoisomerase IV. Relaxes both positively and negatively supercoiled DNA in an ATP-dependent fashion, decatenates interlocked circles. If this subunit is reconstituted with GyrA from E.coli the hybrid enzyme supercoils relaxed plasmid DNA; if paired with E.coli ParC supercoiling is not restored. This the first bacteria shown to not contain DNA gyrase, although it has 2 copies of a reverse gyrase that introduces positive supercoils. Type II topoisomerases break and join 2 DNA strands simultaneously in an ATP-dependent manner. The sequence is that of Type 2 topoisomerase subunit B from Aquifex aeolicus (strain VF5).